Reading from the N-terminus, the 207-residue chain is Probable GTP-binding protein EngB (207 aa).

Positions 22–194 (DLPEVAFAGR…LQRLDVALSD (173 aa)) constitute an EngB-type G domain. GTP contacts are provided by residues 30–37 (GRSNVGKS), 57–61 (GRTQL), 75–78 (DLPG), 142–145 (TKVD), and 173–175 (FSA). Mg(2+)-binding residues include Ser-37 and Thr-59.

It belongs to the TRAFAC class TrmE-Era-EngA-EngB-Septin-like GTPase superfamily. EngB GTPase family. Mg(2+) is required as a cofactor.

Necessary for normal cell division and for the maintenance of normal septation. This chain is Probable GTP-binding protein EngB, found in Syntrophotalea carbinolica (strain DSM 2380 / NBRC 103641 / GraBd1) (Pelobacter carbinolicus).